The chain runs to 357 residues: Gene 58 protein (357 aa).

Belongs to the herpesviridae BMRF2 family.

This Saimiri sciureus (Common squirrel monkey) protein is Gene 58 protein (58).